The chain runs to 645 residues: Cysteine-rich receptor-like protein kinase 10 (645 aa).

Positions 1–27 (MSMACYYLAAAAAGLALLLLHAPLTDA) are cleaved as a signal peptide. Gnk2-homologous domains lie at 28–132 (QTLV…NDAF) and 140–251 (SQGM…VYPF). Residues 28–283 (QTLVPLCGDS…AGERSKNKRS (256 aa)) lie on the Extracellular side of the membrane. N39 and N91 each carry an N-linked (GlcNAc...) asparagine glycan. 2 disulfides stabilise this stretch: C86/C95 and C98/C123. N-linked (GlcNAc...) asparagine glycosylation is found at N151 and N169. 2 disulfides stabilise this stretch: C204–C213 and C216–C242. A helical transmembrane segment spans residues 284-304 (AILAISMPTIALVLATIAAWF). Residues 305 to 645 (CSTSWRRRRL…WVQEIGATAS (341 aa)) lie on the Cytoplasmic side of the membrane. The Protein kinase domain occupies 348–619 (FSEHKRLGEG…PLMSAVNAML (272 aa)). ATP contacts are provided by residues 354 to 362 (LGEGGFGVV) and K376. Residue D473 is the Proton acceptor of the active site.

Belongs to the protein kinase superfamily. Ser/Thr protein kinase family. CRK subfamily.

It localises to the membrane. In terms of biological role, involved in disease resistance. Required for NPR1/NH1-mediated immunity to the bacterial blight pathogen Xanthomomas oryzae pv. oryzae (Xoo). Required for the benzothiadiazole (BTH)-induced immune response. Probably regulated by the transcription factor TGA2.1. This chain is Cysteine-rich receptor-like protein kinase 10, found in Oryza sativa subsp. japonica (Rice).